The following is a 262-amino-acid chain: Glutamate racemase (262 aa).

Residues 10–11 (DS) and 42–43 (FG) contribute to the substrate site. The Proton donor/acceptor role is filled by cysteine 74. 75–76 (NT) serves as a coordination point for substrate. Cysteine 189 (proton donor/acceptor) is an active-site residue. Position 190 to 191 (190 to 191 (TH)) interacts with substrate.

This sequence belongs to the aspartate/glutamate racemases family.

The enzyme catalyses L-glutamate = D-glutamate. It participates in cell wall biogenesis; peptidoglycan biosynthesis. Its function is as follows. Provides the (R)-glutamate required for cell wall biosynthesis. The protein is Glutamate racemase of Mesorhizobium japonicum (strain LMG 29417 / CECT 9101 / MAFF 303099) (Mesorhizobium loti (strain MAFF 303099)).